The sequence spans 445 residues: Protein trichome berefringence-like 7 (445 aa).

A helical; Signal-anchor for type II membrane protein transmembrane segment spans residues 69 to 89 (IIAGTIVSFLVIIAGGYLYVV). Residues 188 to 190 (GDS) carry the GDS motif motif. The short motif at 418 to 432 (DCSHWCLPGVPDIWN) is the DCXHWCLPGXXDXWN motif element.

Belongs to the PC-esterase family. TBL subfamily.

It localises to the membrane. May act as a bridging protein that binds pectin and other cell wall polysaccharides. Probably involved in maintaining esterification of pectins. May be involved in the specific O-acetylation of cell wall polymers. The protein is Protein trichome berefringence-like 7 (TBL7) of Arabidopsis thaliana (Mouse-ear cress).